A 272-amino-acid polypeptide reads, in one-letter code: Putative pyruvate, phosphate dikinase regulatory protein 1 (272 aa).

Residue 151–158 (GISRTSKT) participates in ADP binding.

It belongs to the pyruvate, phosphate/water dikinase regulatory protein family. PDRP subfamily.

It carries out the reaction N(tele)-phospho-L-histidyl/L-threonyl-[pyruvate, phosphate dikinase] + ADP = N(tele)-phospho-L-histidyl/O-phospho-L-threonyl-[pyruvate, phosphate dikinase] + AMP + H(+). It catalyses the reaction N(tele)-phospho-L-histidyl/O-phospho-L-threonyl-[pyruvate, phosphate dikinase] + phosphate + H(+) = N(tele)-phospho-L-histidyl/L-threonyl-[pyruvate, phosphate dikinase] + diphosphate. Functionally, bifunctional serine/threonine kinase and phosphorylase involved in the regulation of the pyruvate, phosphate dikinase (PPDK) by catalyzing its phosphorylation/dephosphorylation. The chain is Putative pyruvate, phosphate dikinase regulatory protein 1 from Staphylococcus epidermidis (strain ATCC 35984 / DSM 28319 / BCRC 17069 / CCUG 31568 / BM 3577 / RP62A).